Consider the following 271-residue polypeptide: MKLVFYGAGNMAQAIFTGIINSSNLDANDIYLTNKSNEQALKAFAEKLGVNYSYDDATLLKDADYVFLGTKPHDFDALATRIKPHITKDNCFISIMAGIPIDYIKQQLECQNPVARIMPNTNAQVGHSVTGISFSNNFDPKSKDEINDLVKAFGSVIEVSEDHLHQVTAITGSGPAFLYHVFEQYVKAGTKLGLEKEQVEESIRNLIIGTSKMIERSDLSMAQLRKNITSKGGTTQAGLDTLSQYDLVSIFEDCLNAAVDRSIELSNIEDQ.

This sequence belongs to the pyrroline-5-carboxylate reductase family.

The protein localises to the cytoplasm. The catalysed reaction is L-proline + NADP(+) = (S)-1-pyrroline-5-carboxylate + NADPH + 2 H(+). It catalyses the reaction L-proline + NAD(+) = (S)-1-pyrroline-5-carboxylate + NADH + 2 H(+). Its pathway is amino-acid biosynthesis; L-proline biosynthesis; L-proline from L-glutamate 5-semialdehyde: step 1/1. Catalyzes the reduction of 1-pyrroline-5-carboxylate (PCA) to L-proline. In Staphylococcus aureus (strain COL), this protein is Pyrroline-5-carboxylate reductase.